Reading from the N-terminus, the 170-residue chain is Photosystem II extrinsic protein V (170 aa).

An N-terminal signal peptide occupies residues 1–34; it reads MNKILGIDPLKKFIFGISAFVLLFWQLNVGAANA. The heme c site is built by cysteine 70, cysteine 73, histidine 74, and histidine 125.

It belongs to the cytochrome c family. PsbV subfamily. In terms of assembly, PSII is composed of 1 copy each of membrane proteins PsbA, PsbB, PsbC, PsbD, PsbE, PsbF, PsbH, PsbI, PsbJ, PsbK, PsbL, PsbM, PsbT, PsbX, PsbY, PsbZ, Psb30/Ycf12, peripheral proteins PsbO, CyanoQ (PsbQ), PsbU, PsbV and a large number of cofactors. It forms dimeric complexes. Heme c is required as a cofactor.

It is found in the cellular thylakoid membrane. Its function is as follows. One of the extrinsic, lumenal subunits of photosystem II (PSII). PSII is a light-driven water plastoquinone oxidoreductase, using light energy to abstract electrons from H(2)O, generating a proton gradient subsequently used for ATP formation. The extrinsic proteins stabilize the structure of photosystem II oxygen-evolving complex (OEC), the ion environment of oxygen evolution and protect the OEC against heat-induced inactivation. Low-potential cytochrome c that plays a role in the OEC of PSII. This chain is Photosystem II extrinsic protein V, found in Picosynechococcus sp. (strain ATCC 27264 / PCC 7002 / PR-6) (Agmenellum quadruplicatum).